The primary structure comprises 157 residues: MSYKQYFDSLPLKLKSFFQRYPPSIKYSPVSTSTKAINANPFLPNKHPVTQRFHDPKYSLRRMSDVYKLALRYGVEEFLPPIENTKKLFFEEKYNKKTLMKGVLLPKGHKHELKLNEKLKKREEALKKVDELIASKKGSKYAKRVEKMKKNQSIGWF.

Belongs to the mitochondrion-specific ribosomal protein mL59 family. Component of the mitochondrial large ribosomal subunit (mt-LSU). Mature yeast 74S mitochondrial ribosomes consist of a small (37S) and a large (54S) subunit. The 37S small subunit contains a 15S ribosomal RNA (15S mt-rRNA) and 34 different proteins. The 54S large subunit contains a 21S rRNA (21S mt-rRNA) and 46 different proteins.

Its subcellular location is the mitochondrion. Its function is as follows. Component of the mitochondrial ribosome (mitoribosome), a dedicated translation machinery responsible for the synthesis of mitochondrial genome-encoded proteins, including at least some of the essential transmembrane subunits of the mitochondrial respiratory chain. The mitoribosomes are attached to the mitochondrial inner membrane and translation products are cotranslationally integrated into the membrane. The protein is Large ribosomal subunit protein mL59 (MRPL25) of Saccharomyces cerevisiae (strain ATCC 204508 / S288c) (Baker's yeast).